The following is a 709-amino-acid chain: U3 small nucleolar RNA-associated protein 25 (709 aa).

Residues 1 to 156 form a disordered region; that stretch reads MVKRTGNGTD…DERDPFESHF (156 aa). A compositionally biased stretch (basic and acidic residues) spans 22–36; the sequence is DLRSIRRARNDKEPV. The span at 37-66 shows a compositional bias: acidic residues; the sequence is EEPEIPVASEEDGELSEDSEEDATNEVQEQ. The segment covering 82–91 has biased composition (basic and acidic residues); it reads KSEHPEDRQR. Acidic residues-rich tracts occupy residues 105–116 and 126–150; these read SSDDELSEDEKG and PGEEEPQSEEELSEGDEDESEDERD.

It belongs to the UTP25 family. Component of the ribosomal small subunit (SSU) processome composed of at least 40 protein subunits and snoRNA U3.

The protein localises to the nucleus. The protein resides in the nucleolus. DEAD-box RNA helicase-like protein required for pre-18S rRNA processing, specifically at sites A0, A1, and A2. In Zygosaccharomyces rouxii (strain ATCC 2623 / CBS 732 / NBRC 1130 / NCYC 568 / NRRL Y-229), this protein is U3 small nucleolar RNA-associated protein 25 (UTP25).